The sequence spans 205 residues: Riboflavin kinase (205 aa).

Residues 1–24 (MRPDTSRDPVAGPDSGPEPPFPIR) form a disordered region. Mg(2+) contacts are provided by Thr-44 and Asn-46. The active-site Nucleophile is Glu-104.

Belongs to the flavokinase family. Requires Zn(2+) as cofactor. Mg(2+) serves as cofactor.

The enzyme catalyses riboflavin + ATP = FMN + ADP + H(+). It participates in cofactor biosynthesis; FMN biosynthesis; FMN from riboflavin (ATP route): step 1/1. Catalyzes the phosphorylation of riboflavin (vitamin B2) to form flavin mononucleotide (FMN) coenzyme. This Aspergillus terreus (strain NIH 2624 / FGSC A1156) protein is Riboflavin kinase (fmn1).